The chain runs to 1364 residues: RecQ-like DNA helicase BLM (1364 aa).

2 disordered regions span residues 108-131 (VHGNDSANKPPSTEDAASKKTGIN) and 147-174 (DDFDTSVSPPKSHAGKGGKTPQKCKNTS). The interval 328 to 377 (DSKVPSQLLTLMLEICDLVDKIPISELHVLSCGLDLKKKRDMRKRLLSND) is necessary for dimerization and homooligomerization. Disordered regions lie at residues 380–416 (FRSSPADSSTVSLTSCTSSTQNRDFNVNAPKGAESLS), 484–515 (RFNTPQNEKPISSSTCTRPYSQPIDDMDNPDL), and 535–580 (SPAA…SLLS). Positions 387-399 (SSTVSLTSCTSST) are enriched in low complexity. Residues 484–503 (RFNTPQNEKPISSSTCTRPY) are compositionally biased toward polar residues. A compositionally biased stretch (basic and acidic residues) spans 555-566 (AQLDSRNKEKNT). Positions 567–580 (RNNTGDTTNPSLLS) are enriched in polar residues. ATP contacts are provided by residues 620-624 (FRTNQ) and 644-648 (GGGKS). The 176-residue stretch at 628-803 (INACLCGEDC…LNQLKMTKPQ (176 aa)) folds into the Helicase ATP-binding domain. Residues 747 to 750 (DEAH) carry the DEAH box motif. 3' overhang DNA-binding regions lie at residues 822-825 (KPKR) and 849-851 (SRH). A Helicase C-terminal domain is found at 829 to 976 (DCVEWIKKHH…TKQTHFNNLY (148 aa)). R934 is a binding site for ATP. Residues 952–955 (RIRR) are 3' overhang DNA-binding. Zn(2+) contacts are provided by C988, C1007, C1015, and C1018. The tract at residues 1046–1090 (LVQGRGKGRSNNTRLTLNMMVDIFLGSKSAKIQTGLFGKGAAYSR) is DNA Holliday junction binding. 3 3' overhang DNA-binding regions span residues 1061–1063 (TLN), 1072–1076 (SKSAK), and 1111–1117 (YITFNDQ). The region spanning 1164 to 1244 (EEMVKKCQAE…QKYSEWTLPV (81 aa)) is the HRDC domain. Residues 1179-1196 (KRLGKIFGVHYFNIFNTA) are necessary for ssDNA and DNA Holliday junction binding. Position 1194 (N1194) interacts with ATP. Residues 1251–1364 (SGGPANVSAR…RFLKPSYSMF (114 aa)) form a disordered region. Over residues 1273 to 1282 (KSSYFSSNNK) the composition is skewed to polar residues. Residues 1283 to 1300 (KGPKRKNSSYFGKSKKRK) are compositionally biased toward basic residues. Positions 1285–1301 (PKRKNSSYFGKSKKRKT) match the Nuclear localization signal motif. Residues 1306-1335 (QQSRSKNGNSSYARKNSTAKTSSSYISGSK) are compositionally biased toward polar residues.

Belongs to the helicase family. RecQ subfamily. In terms of assembly, monomer. Homodimer (via N-terminus). Homotetramer (via N-terminus); dimer of dimers. Homohexamer (via N-terminus). Self-association negatively regulates DNA unwinding amplitude and rate. Oligomer complexes dissociate into monomer in presence of ATP. It depends on Zn(2+) as a cofactor.

Its subcellular location is the nucleus. The enzyme catalyses Couples ATP hydrolysis with the unwinding of duplex DNA by translocating in the 3'-5' direction.. It catalyses the reaction ATP + H2O = ADP + phosphate + H(+). Functionally, ATP-dependent DNA helicase that unwinds single- and double-stranded DNA in a 3'-5' direction. Participates in DNA replication and repair. Involved in 5'-end resection of DNA during double-strand break (DSB) repair. Negatively regulates sister chromatid exchange (SCE). Stimulates DNA 4-way junction branch migration and DNA Holliday junction dissolution. Binds single-stranded DNA (ssDNA), forked duplex DNA and DNA Holliday junction. The chain is RecQ-like DNA helicase BLM (blm) from Xenopus laevis (African clawed frog).